Here is a 210-residue protein sequence, read N- to C-terminus: ATP-dependent Clp protease proteolytic subunit (210 aa).

Residue S107 is the Nucleophile of the active site. H132 is a catalytic residue.

Belongs to the peptidase S14 family. Fourteen ClpP subunits assemble into 2 heptameric rings which stack back to back to give a disk-like structure with a central cavity, resembling the structure of eukaryotic proteasomes.

The protein localises to the cytoplasm. It catalyses the reaction Hydrolysis of proteins to small peptides in the presence of ATP and magnesium. alpha-casein is the usual test substrate. In the absence of ATP, only oligopeptides shorter than five residues are hydrolyzed (such as succinyl-Leu-Tyr-|-NHMec, and Leu-Tyr-Leu-|-Tyr-Trp, in which cleavage of the -Tyr-|-Leu- and -Tyr-|-Trp bonds also occurs).. Its function is as follows. Cleaves peptides in various proteins in a process that requires ATP hydrolysis. Has a chymotrypsin-like activity. Plays a major role in the degradation of misfolded proteins. The chain is ATP-dependent Clp protease proteolytic subunit from Zymomonas mobilis subsp. mobilis (strain ATCC 31821 / ZM4 / CP4).